The primary structure comprises 562 residues: Protein FAM83D-A (562 aa).

The interval 424 to 471 is disordered; the sequence is ITTQTTETSQCTTQTPAPTSSVARLSNSSNSSSSSFSSTSITSTGSNC. The span at 425–471 shows a compositional bias: low complexity; sequence TTQTTETSQCTTQTPAPTSSVARLSNSSNSSSSSFSSTSITSTGSNC.

This sequence belongs to the FAM83 family.

It is found in the cytoplasm. The protein resides in the cytoskeleton. The protein localises to the spindle. It localises to the spindle pole. In terms of biological role, may regulate cell proliferation, growth, migration and epithelial to mesenchymal transition. May also be important for proper chromosome congression and alignment during mitosis. The chain is Protein FAM83D-A from Xenopus laevis (African clawed frog).